We begin with the raw amino-acid sequence, 896 residues long: Lipoxygenase 2, chloroplastic (896 aa).

The transit peptide at 1-56 (MYCRESLSSLQTLNVAKSLSSLFPKQSALINPISAGRRNNLPRPNLRRRCKVTASR) directs the protein to the chloroplast. The PLAT domain maps to 79-199 (ITAQEEFLEG…VDPTKRIFFS (121 aa)). The EIF4E2 binding stretch occupies residues 175 to 232 (GSITFTCESWVAPKSVDPTKRIFFSDKSYLPSQTPEPLKKYRKEELETLQGKNREEVG). The Lipoxygenase domain maps to 202 to 896 (SYLPSQTPEP…GMGVPYSISI (695 aa)). Positions 554, 559, 746, 750, and 896 each coordinate Fe cation.

It belongs to the lipoxygenase family. Interacts with EIF4E2. Requires Fe cation as cofactor. In terms of tissue distribution, in leaves and inflorescences but not abundant in seeds, roots and stems.

The protein resides in the plastid. The protein localises to the chloroplast. Its subcellular location is the cytoplasm. It carries out the reaction (9Z,12Z)-octadecadienoate + O2 = (13S)-hydroperoxy-(9Z,11E)-octadecadienoate. It catalyses the reaction (9Z,12Z,15Z)-octadecatrienoate + O2 = (13S)-hydroperoxy-(9Z,11E,15Z)-octadecatrienoate. It participates in lipid metabolism; oxylipin biosynthesis. Its function is as follows. 13S-lipoxygenase that can use linolenic acid as substrates. Plant lipoxygenases may be involved in a number of diverse aspects of plant physiology including growth and development, pest resistance, and senescence or responses to wounding. Catalyzes the hydroperoxidation of lipids containing a cis,cis-1,4-pentadiene structure. Required for the wound-induced synthesis of jasmonic acid (JA) in leaves. In Arabidopsis thaliana (Mouse-ear cress), this protein is Lipoxygenase 2, chloroplastic (LOX2).